A 212-amino-acid chain; its full sequence is 3,4-dihydroxy-2-butanone 4-phosphate synthase (212 aa).

Residues 37–38 (RE), Asp42, 150–154 (RRGHT), and Glu174 contribute to the D-ribulose 5-phosphate site. Position 38 (Glu38) interacts with Mg(2+). Residue His153 participates in Mg(2+) binding.

It belongs to the DHBP synthase family. Homodimer. Requires Mg(2+) as cofactor. Mn(2+) is required as a cofactor.

The catalysed reaction is D-ribulose 5-phosphate = (2S)-2-hydroxy-3-oxobutyl phosphate + formate + H(+). Its pathway is cofactor biosynthesis; riboflavin biosynthesis; 2-hydroxy-3-oxobutyl phosphate from D-ribulose 5-phosphate: step 1/1. Catalyzes the conversion of D-ribulose 5-phosphate to formate and 3,4-dihydroxy-2-butanone 4-phosphate. The sequence is that of 3,4-dihydroxy-2-butanone 4-phosphate synthase from Shewanella pealeana (strain ATCC 700345 / ANG-SQ1).